The primary structure comprises 607 residues: Condensin-2 complex subunit H2 (607 aa).

Thr19 bears the Phosphothreonine mark. Residues Ser95, Ser231, Ser235, and Ser252 each carry the phosphoserine modification. 2 disordered regions span residues 211 to 312 and 325 to 347; these read YPMS…WQSL and KGKP…KRKG. Residues 254 to 263 show a composition bias toward acidic residues; sequence GEEDAEDGAE. Ser494 is subject to Phosphoserine.

The protein belongs to the CND2 H2 (condensin-2 subunit 2) family. Component of the condensin-2 complex, which contains the SMC2 and SMC4 heterodimer, and three non SMC subunits, NCAPG2, NCAPH2 and NCAPD3 that probably regulate the complex.

It localises to the nucleus. Its function is as follows. Regulatory subunit of the condensin-2 complex, a complex that seems to provide chromosomes with an additional level of organization and rigidity and in establishing mitotic chromosome architecture. May promote the resolution of double-strand DNA catenanes (intertwines) between sister chromatids. Condensin-mediated compaction likely increases tension in catenated sister chromatids, providing directionality for type II topoisomerase-mediated strand exchanges toward chromatid decatenation. Required for decatenation of chromatin bridges at anaphase. Early in neurogenesis, may play an essential role to ensure accurate mitotic chromosome condensation in neuron stem cells, ultimately affecting neuron pool and cortex size. Seems to have lineage-specific role in T-cell development. The sequence is that of Condensin-2 complex subunit H2 from Mus musculus (Mouse).